Reading from the N-terminus, the 185-residue chain is Transposon Tn3 resolvase (185 aa).

The Resolvase/invertase-type recombinase catalytic domain maps to 2–137 (RIFGYARVST…EGRQEAKLKG (136 aa)). The active-site O-(5'-phospho-DNA)-serine intermediate is S10. Positions 161-180 (ATEIAHQLSIARSTVYKILE) form a DNA-binding region, H-T-H motif.

It belongs to the site-specific recombinase resolvase family.

Functionally, resolvase catalyzes the resolution (a site-specific recombination) of the cointegrated replicon to yield the final transposition products. This Escherichia coli protein is Transposon Tn3 resolvase (tnpR).